Consider the following 97-residue polypeptide: Conotoxin Cal6.1e (97 aa).

An N-terminal signal peptide occupies residues 1-22; sequence MKLTTVLIVAVLVLAACQFTVT. Positions 23-49 are disordered; that stretch reads DNSGDDTENPSLRSAGENQNPDSTKTI. Positions 23-60 are excised as a propeptide; the sequence is DNSGDDTENPSLRSAGENQNPDSTKTITARATRARTNM. The segment covering 31 to 45 has biased composition (polar residues); sequence NPSLRSAGENQNPDS. 3 cysteine pairs are disulfide-bonded: C71/C87, C78/C91, and C86/C96.

Belongs to the conotoxin O1 superfamily. As to expression, expressed by the venom duct.

It localises to the secreted. In terms of biological role, probable neurotoxin with unknown target. Possibly targets ion channels. In Californiconus californicus (California cone), this protein is Conotoxin Cal6.1e.